Here is a 119-residue protein sequence, read N- to C-terminus: U-scoloptoxin(01)-Er1a (119 aa).

A signal peptide spans 1–22 (MEIHSNIILLLLIALFAIFVKM). A Chitin-binding type-2 domain is found at 39-97 (NFACSGKKPGFYADEGFDCQVYHMCSPEGQLTTYLCGPGTIFNQKKLVCDLPTNYNCAD). A disulfide bond links cysteine 74 and cysteine 87.

This sequence belongs to the scoloptoxin-01 family. In terms of processing, contains 3 disulfide bonds. In terms of tissue distribution, expressed by the venom gland.

The protein localises to the secreted. In Ethmostigmus rubripes (Giant centipede), this protein is U-scoloptoxin(01)-Er1a.